Reading from the N-terminus, the 556-residue chain is uncharacterized protein (556 aa).

Residues 16-36 traverse the membrane as a helical segment; that stretch reads LFWTIGVLGAGALTTFSAVMI.

The protein resides in the membrane. This is an uncharacterized protein from Mycoplasma genitalium (strain ATCC 33530 / DSM 19775 / NCTC 10195 / G37) (Mycoplasmoides genitalium).